We begin with the raw amino-acid sequence, 543 residues long: uncharacterized protein (543 aa).

A TRAM domain is found at M1–K59. Positions 283, 312, 333, and 381 each coordinate S-adenosyl-L-methionine. C408 (nucleophile) is an active-site residue.

Belongs to the class I-like SAM-binding methyltransferase superfamily. RNA M5U methyltransferase family.

This is an uncharacterized protein from Streptococcus pneumoniae serotype 4 (strain ATCC BAA-334 / TIGR4).